The sequence spans 173 residues: HAM34 protein (173 aa).

A compositionally biased stretch (low complexity) spans Ala-22–Pro-89. Residues Ala-22 to His-155 form a disordered region. The span at Thr-95–Gly-133 shows a compositional bias: polar residues. The segment covering Thr-134–His-155 has biased composition (low complexity).

In terms of tissue distribution, germinating spores.

Its function is as follows. Could be a structural protein required for the infection process of B.lactucae. This is HAM34 protein (HAM34) from Bremia lactucae (Lettuce downy mildew).